The sequence spans 106 residues: Malonate decarboxylase acyl carrier protein (106 aa).

At serine 28 the chain carries O-(phosphoribosyl dephospho-coenzyme A)serine.

It belongs to the MdcC family. In terms of processing, covalently binds the prosthetic group of malonate decarboxylase.

The protein resides in the cytoplasm. Subunit of malonate decarboxylase, it is an acyl carrier protein to which acetyl and malonyl thioester residues are bound via a 2'-(5''-phosphoribosyl)-3'-dephospho-CoA prosthetic group and turn over during the catalytic mechanism. The polypeptide is Malonate decarboxylase acyl carrier protein (Stenotrophomonas maltophilia (strain R551-3)).